Here is a 924-residue protein sequence, read N- to C-terminus: DNA repair and recombination protein RDH54 (924 aa).

A compositionally biased stretch (basic and acidic residues) spans 1-10; sequence MQIPKYENKP. 2 disordered regions span residues 1–21 and 155–183; these read MQIP…GSNK and EALS…NDGG. Residues 168 to 178 show a composition bias toward low complexity; that stretch reads TTSTTETVPST. The region spanning 299–487 is the Helicase ATP-binding domain; that stretch reads LENDSDISGC…FTIIDFINPG (189 aa). 346–353 lines the ATP pocket; it reads IPLTGLCK. Residues 472–475 carry the DEGH box motif; sequence NDLN. Lys615 participates in a covalent cross-link: Glycyl lysine isopeptide (Lys-Gly) (interchain with G-Cter in ubiquitin). The Helicase C-terminal domain maps to 631 to 790; it reads KLRVLMTLLE…DSEMRNKESS (160 aa).

This sequence belongs to the SNF2/RAD54 helicase family. In terms of assembly, interacts with RAD51 and DMC1.

The protein resides in the nucleus. It catalyses the reaction ATP + H2O = ADP + phosphate + H(+). Functionally, involved in the recombinational repair of double-strand breaks (DSB) in DNA during mitosis and meiosis. Has DNA dependent ATPase activity. Promotes D-loop (displacement loop) formation with RAD51 recombinase. Modifies the topology of double-stranded DNA during the D-loop reaction to facilitate the invasion of the homologous duplex molecule by the initiating single-stranded DNA substrate. Required for adaptation from G2/M checkpoint arrest induced by a double strand break, by participating in monitoring the extent of single-stranded DNA produced by resection of DNA ends. This role is distinct from its roles in recombination. Promotes colocalization of RAD51 and DMC1 during meiotic recombination. Involved in crossover interference. This chain is DNA repair and recombination protein RDH54 (RDH54), found in Saccharomyces cerevisiae (strain RM11-1a) (Baker's yeast).